Reading from the N-terminus, the 322-residue chain is Beta-ketoacyl-[acyl-carrier-protein] synthase III (322 aa).

Catalysis depends on residues C113 and H247. Positions 248–252 are ACP-binding; sequence QANIR. Residue N278 is part of the active site.

It belongs to the thiolase-like superfamily. FabH family. In terms of assembly, homodimer.

It is found in the cytoplasm. The catalysed reaction is malonyl-[ACP] + acetyl-CoA + H(+) = 3-oxobutanoyl-[ACP] + CO2 + CoA. The protein operates within lipid metabolism; fatty acid biosynthesis. In terms of biological role, catalyzes the condensation reaction of fatty acid synthesis by the addition to an acyl acceptor of two carbons from malonyl-ACP. Catalyzes the first condensation reaction which initiates fatty acid synthesis and may therefore play a role in governing the total rate of fatty acid production. Possesses both acetoacetyl-ACP synthase and acetyl transacylase activities. Its substrate specificity determines the biosynthesis of branched-chain and/or straight-chain of fatty acids. The chain is Beta-ketoacyl-[acyl-carrier-protein] synthase III from Tropheryma whipplei (strain TW08/27) (Whipple's bacillus).